Reading from the N-terminus, the 512-residue chain is Nephrocan (512 aa).

An N-terminal signal peptide occupies residues 1–19; it reads MHPLWAFLLGLSLTNGLSA. The LRRNT domain maps to 20-44; sequence NCPGRCSCDSMQSVQCYRLMELPSG. 17 LRR repeats span residues 45 to 69, 71 to 93, 94 to 117, 119 to 138, 139 to 162, 164 to 185, 186 to 208, 210 to 232, 234 to 253, 254 to 276, 277 to 299, 301 to 320, 321 to 344, 346 to 371, 373 to 389, 390 to 413, and 415 to 442; these read IPST…NFTG, LALE…TFKT, LSTL…LPAN, EVLK…EFEG, LKNL…MLSP, ASLQ…PLSL, PHLK…VFTS, QNLQ…LPKS, LSLK…DMKH, LENL…AQQL, TNLT…LPSR, QKLD…EFQD, LRDL…ALQR, SQLS…TLAR, DLKG…ELRD, LKQL…ALEG, and PRLR…VLKA. Asparagine 66 carries N-linked (GlcNAc...) asparagine glycosylation. A compositionally biased stretch (basic and acidic residues) spans 474–484; it reads EHHLQQSEKSK. Residues 474–512 form a disordered region; it reads EHHLQQSEKSKETKKKPKPEDSSSIRLNMDDDDDDYEID. Over residues 503 to 512 the composition is skewed to acidic residues; sequence DDDDDDYEID.

This sequence belongs to the small leucine-rich proteoglycan (SLRP) family. In terms of processing, N-glycosylated. In terms of tissue distribution, expressed at highest levels in the kidney, where it is primarily detected in the epithelial cells of distal tubules and collecting ducts, and more weakly in proximal epithelial cells. Expressed at lower levels in heart and lung (at protein level). Detected in skeletal muscle.

The protein localises to the secreted. Functionally, may inhibit TGF-beta signaling. The chain is Nephrocan from Mus musculus (Mouse).